A 447-amino-acid polypeptide reads, in one-letter code: Tubulin beta-6 chain (447 aa).

Positions 11, 69, 138, 142, 143, 144, 204, and 226 each coordinate GTP. Glu-69 contacts Mg(2+). Residues 426–447 (QDATAEEEGEFDEDEELDDGMM) are disordered. Acidic residues predominate over residues 429–447 (TAEEEGEFDEDEELDDGMM).

Belongs to the tubulin family. In terms of assembly, dimer of alpha and beta chains. A typical microtubule is a hollow water-filled tube with an outer diameter of 25 nm and an inner diameter of 15 nM. Alpha-beta heterodimers associate head-to-tail to form protofilaments running lengthwise along the microtubule wall with the beta-tubulin subunit facing the microtubule plus end conferring a structural polarity. Microtubules usually have 13 protofilaments but different protofilament numbers can be found in some organisms and specialized cells. It depends on Mg(2+) as a cofactor.

The protein resides in the cytoplasm. It is found in the cytoskeleton. Functionally, tubulin is the major constituent of microtubules, a cylinder consisting of laterally associated linear protofilaments composed of alpha- and beta-tubulin heterodimers. Microtubules grow by the addition of GTP-tubulin dimers to the microtubule end, where a stabilizing cap forms. Below the cap, tubulin dimers are in GDP-bound state, owing to GTPase activity of alpha-tubulin. This Ectocarpus variabilis (Brown alga) protein is Tubulin beta-6 chain (TUBB6).